The primary structure comprises 146 residues: Hemoglobin subunit beta (146 aa).

At valine 1 the chain carries N-acetylvaline. The region spanning 2-146 (DLTAEEKAAV…VANALAHKYH (145 aa)) is the Globin domain. Serine 44 bears the Phosphoserine mark. The residue at position 59 (lysine 59) is an N6-acetyllysine. Position 63 (histidine 63) interacts with heme b. Lysine 82 is subject to N6-acetyllysine. Heme b is bound at residue histidine 92. Cysteine 93 bears the S-nitrosocysteine mark. Lysine 144 carries the post-translational modification N6-acetyllysine.

Belongs to the globin family. In terms of assembly, heterotetramer of two alpha chains and two beta chains. As to expression, red blood cells.

Functionally, involved in oxygen transport from the lung to the various peripheral tissues. The chain is Hemoglobin subunit beta (HBB) from Rhinoceros unicornis (Greater Indian rhinoceros).